A 432-amino-acid chain; its full sequence is Histidine--tRNA ligase (432 aa).

This sequence belongs to the class-II aminoacyl-tRNA synthetase family. Homodimer.

The protein localises to the cytoplasm. It carries out the reaction tRNA(His) + L-histidine + ATP = L-histidyl-tRNA(His) + AMP + diphosphate + H(+). This chain is Histidine--tRNA ligase, found in Ralstonia nicotianae (strain ATCC BAA-1114 / GMI1000) (Ralstonia solanacearum).